The following is a 226-amino-acid chain: ATP-dependent dethiobiotin synthetase BioD (226 aa).

ATP is bound at residue G12 to V17. A Mg(2+)-binding site is contributed by T16. K37 is an active-site residue. Position 41 (T41) interacts with substrate. ATP is bound by residues D49, E108–G111, G169–S170, and P197–G199. The Mg(2+) site is built by D49 and E108.

It belongs to the dethiobiotin synthetase family. Homodimer. Requires Mg(2+) as cofactor.

The protein resides in the cytoplasm. The enzyme catalyses (7R,8S)-7,8-diammoniononanoate + CO2 + ATP = (4R,5S)-dethiobiotin + ADP + phosphate + 3 H(+). It participates in cofactor biosynthesis; biotin biosynthesis; biotin from 7,8-diaminononanoate: step 1/2. Catalyzes a mechanistically unusual reaction, the ATP-dependent insertion of CO2 between the N7 and N8 nitrogen atoms of 7,8-diaminopelargonic acid (DAPA, also called 7,8-diammoniononanoate) to form a ureido ring. The polypeptide is ATP-dependent dethiobiotin synthetase BioD (Mycobacterium bovis (strain BCG / Pasteur 1173P2)).